A 148-amino-acid polypeptide reads, in one-letter code: Small ribosomal subunit protein eS19 (148 aa).

This sequence belongs to the eukaryotic ribosomal protein eS19 family. As to quaternary structure, part of the 30S ribosomal subunit.

May be involved in maturation of the 30S ribosomal subunit. The sequence is that of Small ribosomal subunit protein eS19 from Methanocaldococcus jannaschii (strain ATCC 43067 / DSM 2661 / JAL-1 / JCM 10045 / NBRC 100440) (Methanococcus jannaschii).